We begin with the raw amino-acid sequence, 193 residues long: Ribose 1,5-bisphosphate phosphokinase PhnN (193 aa).

9-16 (GPSGAGKD) lines the ATP pocket.

Belongs to the ribose 1,5-bisphosphokinase family.

It carries out the reaction alpha-D-ribose 1,5-bisphosphate + ATP = 5-phospho-alpha-D-ribose 1-diphosphate + ADP. The protein operates within metabolic intermediate biosynthesis; 5-phospho-alpha-D-ribose 1-diphosphate biosynthesis; 5-phospho-alpha-D-ribose 1-diphosphate from D-ribose 5-phosphate (route II): step 3/3. In terms of biological role, catalyzes the phosphorylation of ribose 1,5-bisphosphate to 5-phospho-D-ribosyl alpha-1-diphosphate (PRPP). The chain is Ribose 1,5-bisphosphate phosphokinase PhnN from Yersinia pestis.